A 355-amino-acid polypeptide reads, in one-letter code: Ribosomal RNA small subunit methyltransferase H (355 aa).

Residues Gly55–His57, Asp75, Asp122, and Gln129 contribute to the S-adenosyl-L-methionine site. Residues Glu327 to Arg355 are disordered.

The protein belongs to the methyltransferase superfamily. RsmH family.

It is found in the cytoplasm. The catalysed reaction is cytidine(1402) in 16S rRNA + S-adenosyl-L-methionine = N(4)-methylcytidine(1402) in 16S rRNA + S-adenosyl-L-homocysteine + H(+). Specifically methylates the N4 position of cytidine in position 1402 (C1402) of 16S rRNA. This Bordetella avium (strain 197N) protein is Ribosomal RNA small subunit methyltransferase H.